A 129-amino-acid chain; its full sequence is Glycine cleavage system H protein (129 aa).

In terms of domain architecture, Lipoyl-binding spans 24-106 (TYTVGITEHA…YAGGWIFKIK (83 aa)). Position 65 is an N6-lipoyllysine (Lys65).

The protein belongs to the GcvH family. The glycine cleavage system is composed of four proteins: P, T, L and H. (R)-lipoate serves as cofactor.

Functionally, the glycine cleavage system catalyzes the degradation of glycine. The H protein shuttles the methylamine group of glycine from the P protein to the T protein. This Escherichia coli O7:K1 (strain IAI39 / ExPEC) protein is Glycine cleavage system H protein.